The sequence spans 500 residues: Lycopene beta cyclase, chloroplastic (500 aa).

Residues Met-1 to Gly-81 constitute a chloroplast transit peptide. NAD(+) is bound at residue Leu-86–Pro-114.

This sequence belongs to the lycopene cyclase family.

It localises to the plastid. Its subcellular location is the chloroplast. It catalyses the reaction a carotenoid psi-end group = a carotenoid beta-end derivative. It functions in the pathway carotenoid biosynthesis; beta-carotene biosynthesis. Its pathway is carotenoid biosynthesis; beta-zeacarotene biosynthesis. Catalyzes the double cyclization reaction which converts lycopene to beta-carotene and neurosporene to beta-zeacarotene. The polypeptide is Lycopene beta cyclase, chloroplastic (LCY1) (Solanum lycopersicum (Tomato)).